The primary structure comprises 206 residues: Large ribosomal subunit protein uL4 (206 aa).

Residues 48–97 (THAVKNRSLVSGGGKKPWKQKHTGRARQGSTRASQWVGGGKAMGPKPRDY) are disordered. The segment covering 63–72 (KPWKQKHTGR) has biased composition (basic residues).

Belongs to the universal ribosomal protein uL4 family. In terms of assembly, part of the 50S ribosomal subunit.

Functionally, one of the primary rRNA binding proteins, this protein initially binds near the 5'-end of the 23S rRNA. It is important during the early stages of 50S assembly. It makes multiple contacts with different domains of the 23S rRNA in the assembled 50S subunit and ribosome. Its function is as follows. Forms part of the polypeptide exit tunnel. The polypeptide is Large ribosomal subunit protein uL4 (Anaeromyxobacter dehalogenans (strain 2CP-C)).